A 310-amino-acid polypeptide reads, in one-letter code: Nucleotide-binding protein BAD_0837 (310 aa).

31–38 serves as a coordination point for ATP; it reads GMSGAGRS. 82–85 is a GTP binding site; sequence DVRS.

Belongs to the RapZ-like family.

Functionally, displays ATPase and GTPase activities. This chain is Nucleotide-binding protein BAD_0837, found in Bifidobacterium adolescentis (strain ATCC 15703 / DSM 20083 / NCTC 11814 / E194a).